A 354-amino-acid polypeptide reads, in one-letter code: MRFDLEPPSSTAAAHRIGVLLINLGTPDAPTPRAVRRYLAEFLSDPRVVEIPQAVWQVLLRTLILPLRGRASAKKYAAVWMPEGSPLRVYTERQTDSVRHLLTSNGYHVMVDYAMRYGSPNISHALAQFKRAGVERVLLMPMYPQYSASTTATAFDAAFDALARMRNQPEVRTVRHYADHPAYIHALAEQVRQYWAQHGRPDFAAGDKLVLSFHGVPKRTLDLGDPYHDQCQQTGALLTAALGLSTTECRVTFQSRFGKAEWLQPYTAPTLREFGEAGVRRADVFCPGFTADCLETIEEIGMEVRDEFLAGGGKAFHRIPCLNGAPAWIGALGEIVAENLQGWPVRAAQPETVS.

2 residues coordinate Fe cation: histidine 214 and glutamate 295.

This sequence belongs to the ferrochelatase family.

It localises to the cytoplasm. The enzyme catalyses heme b + 2 H(+) = protoporphyrin IX + Fe(2+). Its pathway is porphyrin-containing compound metabolism; protoheme biosynthesis; protoheme from protoporphyrin-IX: step 1/1. Functionally, catalyzes the ferrous insertion into protoporphyrin IX. The sequence is that of Ferrochelatase from Burkholderia lata (strain ATCC 17760 / DSM 23089 / LMG 22485 / NCIMB 9086 / R18194 / 383).